The following is a 246-amino-acid chain: 7-cyano-7-deazaguanine synthase (246 aa).

ATP is bound at residue 24 to 34 (FSGGLDSTTVL). Cys209, Cys219, Cys222, and Cys225 together coordinate Zn(2+).

Belongs to the QueC family. Requires Zn(2+) as cofactor.

The enzyme catalyses 7-carboxy-7-deazaguanine + NH4(+) + ATP = 7-cyano-7-deazaguanine + ADP + phosphate + H2O + H(+). Its pathway is purine metabolism; 7-cyano-7-deazaguanine biosynthesis. Catalyzes the ATP-dependent conversion of 7-carboxy-7-deazaguanine (CDG) to 7-cyano-7-deazaguanine (preQ(0)). The chain is 7-cyano-7-deazaguanine synthase from Polynucleobacter asymbioticus (strain DSM 18221 / CIP 109841 / QLW-P1DMWA-1) (Polynucleobacter necessarius subsp. asymbioticus).